The chain runs to 317 residues: Melanocyte-stimulating hormone receptor (317 aa).

Residues 1 to 37 (MAVQGSQRRLLGSLNSTPTAIPQLGLAANQTGAWCLE) are Extracellular-facing. N-linked (GlcNAc...) asparagine glycosylation is present at asparagine 29. Residues 38-63 (VSIPDGLFLSLGLVSLVENVLVVATI) form a helical membrane-spanning segment. The Cytoplasmic portion of the chain corresponds to 64 to 72 (AKNRNLHSP). Residues 73 to 93 (MYCFICCLALSDLLVSGGNVL) form a helical membrane-spanning segment. The Extracellular segment spans residues 94–118 (ETAVILLLEAGALAARAAVVQQLDN). The chain crosses the membrane as a helical span at residues 119 to 140 (VIDVITCSSMLSSLCFLGAIAV). The Cytoplasmic segment spans residues 141–163 (DRYISIFYALRYHSIVTLPRARR). A helical transmembrane segment spans residues 164–183 (AIAAIWVASVLFSTLFIAYY). The Extracellular segment spans residues 184 to 191 (DHAAVLLC). A helical transmembrane segment spans residues 192–211 (LVVFFLAMLVLMAVLYVHML). The Cytoplasmic portion of the chain corresponds to 212-240 (ARACQHAQGIARLHKRQRPVHQGFGLKGA). A helical membrane pass occupies residues 241-266 (VTLTILLGIFFLCWGPFFLHLTLIVL). Over 267–279 (CPQHPTCSCIFKN) the chain is Extracellular. A helical transmembrane segment spans residues 280 to 300 (FNLFLALIICNAIIDPLIYAF). Residues 301 to 317 (RSQELRRTLKEVLTCSW) are Cytoplasmic-facing. Cysteine 315 is lipidated: S-palmitoyl cysteine.

This sequence belongs to the G-protein coupled receptor 1 family. In terms of assembly, interacts with MGRN1, but does not undergo MGRN1-mediated ubiquitination; this interaction competes with GNAS-binding and thus inhibits agonist-induced cAMP production. Interacts with OPN3; the interaction results in a decrease in MC1R-mediated cAMP signaling and ultimately a decrease in melanin production in melanocytes.

The protein resides in the cell membrane. Receptor for MSH (alpha, beta and gamma) and ACTH. The activity of this receptor is mediated by G proteins which activate adenylate cyclase. Mediates melanogenesis, the production of eumelanin (black/brown) and phaeomelanin (red/yellow), via regulation of cAMP signaling in melanocytes. The chain is Melanocyte-stimulating hormone receptor (MC1R) from Pongo pygmaeus (Bornean orangutan).